Reading from the N-terminus, the 141-residue chain is Hemoglobin subunit alpha (141 aa).

The region spanning 1 to 141 is the Globin domain; the sequence is VLSSKDKANI…VSTVLTSKYR (141 aa). Ser-3 carries the phosphoserine modification. Residues Lys-7 and Lys-11 each carry the N6-succinyllysine modification. The residue at position 16 (Lys-16) is an N6-acetyllysine; alternate. Lys-16 carries the post-translational modification N6-succinyllysine; alternate. Tyr-24 bears the Phosphotyrosine mark. Lys-40 is subject to N6-succinyllysine. Residue Ser-49 is modified to Phosphoserine. His-58 provides a ligand contact to O2. Heme b is bound at residue His-87. Ser-102 is subject to Phosphoserine. Phosphothreonine is present on Thr-108. Ser-124 is subject to Phosphoserine. Phosphothreonine occurs at positions 134 and 137. Residue Ser-138 is modified to Phosphoserine.

It belongs to the globin family. As to quaternary structure, heterotetramer of two alpha chains and two beta chains. In terms of tissue distribution, red blood cells.

In terms of biological role, involved in oxygen transport from the lung to the various peripheral tissues. Its function is as follows. Hemopressin acts as an antagonist peptide of the cannabinoid receptor CNR1. Hemopressin-binding efficiently blocks cannabinoid receptor CNR1 and subsequent signaling. This is Hemoglobin subunit alpha (HBA) from Lama glama (Llama).